A 99-amino-acid chain; its full sequence is Protein MOST-1 (99 aa).

Interacts with TSPO, IGHM and IGHD. As to expression, expressed in the heart, kidney, liver, pancreas, small intestine, ovary, testis, prostate and thymus. Expressed in all of the cancer cell lines tested.

Its subcellular location is the cytoplasm. The protein localises to the microsome membrane. It is found in the endoplasmic reticulum membrane. Its function is as follows. May be involved in cell survival, proliferation and progression of cancer cells. In Homo sapiens (Human), this protein is Protein MOST-1 (C8orf17).